Reading from the N-terminus, the 61-residue chain is Translational regulator CsrA (61 aa).

This sequence belongs to the CsrA/RsmA family. In terms of assembly, homodimer; the beta-strands of each monomer intercalate to form a hydrophobic core, while the alpha-helices form wings that extend away from the core.

The protein localises to the cytoplasm. Its function is as follows. A key translational regulator that binds mRNA to regulate translation initiation and/or mRNA stability. Mediates global changes in gene expression, shifting from rapid growth to stress survival by linking envelope stress, the stringent response and the catabolite repression systems. Usually binds in the 5'-UTR; binding at or near the Shine-Dalgarno sequence prevents ribosome-binding, repressing translation, binding elsewhere in the 5'-UTR can activate translation and/or stabilize the mRNA. Its function is antagonized by small RNA(s). The polypeptide is Translational regulator CsrA (Mannheimia succiniciproducens (strain KCTC 0769BP / MBEL55E)).